Consider the following 108-residue polypeptide: Large ribosomal subunit protein uL23 (108 aa).

Belongs to the universal ribosomal protein uL23 family. In terms of assembly, part of the 50S ribosomal subunit. Contacts protein L29, and trigger factor when it is bound to the ribosome.

In terms of biological role, one of the early assembly proteins it binds 23S rRNA. One of the proteins that surrounds the polypeptide exit tunnel on the outside of the ribosome. Forms the main docking site for trigger factor binding to the ribosome. The sequence is that of Large ribosomal subunit protein uL23 from Polaromonas sp. (strain JS666 / ATCC BAA-500).